Here is a 240-residue protein sequence, read N- to C-terminus: Ubiquinone biosynthesis O-methyltransferase (240 aa).

Arg-44, Gly-64, Asp-85, and Met-129 together coordinate S-adenosyl-L-methionine.

It belongs to the methyltransferase superfamily. UbiG/COQ3 family.

The catalysed reaction is a 3-demethylubiquinol + S-adenosyl-L-methionine = a ubiquinol + S-adenosyl-L-homocysteine + H(+). It catalyses the reaction a 3-(all-trans-polyprenyl)benzene-1,2-diol + S-adenosyl-L-methionine = a 2-methoxy-6-(all-trans-polyprenyl)phenol + S-adenosyl-L-homocysteine + H(+). It functions in the pathway cofactor biosynthesis; ubiquinone biosynthesis. Functionally, O-methyltransferase that catalyzes the 2 O-methylation steps in the ubiquinone biosynthetic pathway. This is Ubiquinone biosynthesis O-methyltransferase from Escherichia coli O7:K1 (strain IAI39 / ExPEC).